A 504-amino-acid polypeptide reads, in one-letter code: MINHEVRTHRSAEEFPYEEHLAHKIARVAADPVEVAADTQEMIINRIIDNASVQAASVLRRPVSSARAMAQVRPVTDGRGASVFGLPGRYAAEWAALANGTAVRELDFHDTFLAAEYSHPGDNIPPILAAAQQAGKGGKDLIRGIATGYEIQVNLVRGMCLHEHKIDHVAHLGPSAAAGIGTLLDLDVDTIYQAIGQALHTTTATRQSRKGAISSWKAFAPAFAGKMSIEAVDRAMRGEGAPSPIWEGEDGVIAWLLSGLDHIYTIPLPAEGEAKRAILDTYTKEHSAEYQSQAPIDLARSMGEKLAAQGLDLRDVDSIVLHTSHHTHYVIGTGSNDPQKFDPDASRETLDHSIMYIFAVALEDRAWHHERSYAPERAHRRETIELWNKISTVEDPEWTRRYHSVDPAEKAFGARAVITFKDGTVVEDELAVADAHPLGARPFAREQYIQKFRTLAEGVVSEKEQDRFLDAAQRTHELEDLSELNIELDADILAKAPVIPEGLF.

The protein belongs to the PrpD family. As to quaternary structure, monomer.

It carries out the reaction (2S,3S)-2-methylcitrate = 2-methyl-cis-aconitate + H2O. The catalysed reaction is citrate = D-threo-isocitrate. The protein operates within organic acid metabolism; propanoate degradation. Its pathway is carbohydrate metabolism; tricarboxylic acid cycle; isocitrate from oxaloacetate: step 1/2. Involved in the catabolism of short chain fatty acids (SCFA) via the 2-methylcitrate cycle I (propionate degradation route). Catalyzes the dehydration of 2-methylcitrate (2-MC) to yield the cis isomer 2-methyl-aconitate. Could also catalyze the dehydration of citrate and the hydration of cis-aconitate. The polypeptide is 2-methylcitrate dehydratase 2 (prpD2) (Corynebacterium glutamicum (strain ATCC 13032 / DSM 20300 / JCM 1318 / BCRC 11384 / CCUG 27702 / LMG 3730 / NBRC 12168 / NCIMB 10025 / NRRL B-2784 / 534)).